Here is a 348-residue protein sequence, read N- to C-terminus: Fe(3+) ions import ATP-binding protein FbpC (348 aa).

Residues 7-237 (VELRNVTKRF…PASRFMASFM (231 aa)) enclose the ABC transporter domain. Residue 39–46 (GPSGCGKT) coordinates ATP.

The protein belongs to the ABC transporter superfamily. Fe(3+) ion importer (TC 3.A.1.10) family. In terms of assembly, the complex is composed of two ATP-binding proteins (FbpC), two transmembrane proteins (FbpB) and a solute-binding protein (FbpA).

The protein resides in the cell inner membrane. It carries out the reaction Fe(3+)(out) + ATP + H2O = Fe(3+)(in) + ADP + phosphate + H(+). Its function is as follows. Part of the ABC transporter complex FbpABC involved in Fe(3+) ions import. Responsible for energy coupling to the transport system. The sequence is that of Fe(3+) ions import ATP-binding protein FbpC from Escherichia coli O157:H7.